Reading from the N-terminus, the 722-residue chain is Polyribonucleotide nucleotidyltransferase (722 aa).

Mg(2+) contacts are provided by D486 and D492. Residues 553-612 (PRITTIQIRPEFIKNVIGPGGKVIKDIIARTGAAINIEDSGRVDIASANGEAVKAAIAMI) enclose the KH domain. In terms of domain architecture, S1 motif spans 622–690 (GKIYTGTVRK…KTGKIRLSRK (69 aa)). The segment at 696–722 (RAAQQGAAAGEAAAQPAPAPTQPDAKA) is disordered.

Belongs to the polyribonucleotide nucleotidyltransferase family. The cofactor is Mg(2+).

It localises to the cytoplasm. The enzyme catalyses RNA(n+1) + phosphate = RNA(n) + a ribonucleoside 5'-diphosphate. Functionally, involved in mRNA degradation. Catalyzes the phosphorolysis of single-stranded polyribonucleotides processively in the 3'- to 5'-direction. The chain is Polyribonucleotide nucleotidyltransferase from Myxococcus xanthus (strain DK1622).